We begin with the raw amino-acid sequence, 70 residues long: Small ribosomal subunit protein bS21 (70 aa).

This sequence belongs to the bacterial ribosomal protein bS21 family.

The chain is Small ribosomal subunit protein bS21 from Polaromonas naphthalenivorans (strain CJ2).